We begin with the raw amino-acid sequence, 348 residues long: Protein RecA (348 aa).

G69–T76 is an ATP binding site.

This sequence belongs to the RecA family.

The protein resides in the cytoplasm. In terms of biological role, can catalyze the hydrolysis of ATP in the presence of single-stranded DNA, the ATP-dependent uptake of single-stranded DNA by duplex DNA, and the ATP-dependent hybridization of homologous single-stranded DNAs. It interacts with LexA causing its activation and leading to its autocatalytic cleavage. This is Protein RecA from Picosynechococcus sp. (strain ATCC 27264 / PCC 7002 / PR-6) (Agmenellum quadruplicatum).